The following is a 198-amino-acid chain: A-type ATP synthase subunit E (198 aa).

It belongs to the V-ATPase E subunit family. In terms of assembly, has multiple subunits with at least A(3), B(3), C, D, E, F, H, I and proteolipid K(x).

It is found in the cell membrane. Functionally, component of the A-type ATP synthase that produces ATP from ADP in the presence of a proton gradient across the membrane. This is A-type ATP synthase subunit E from Pyrococcus horikoshii (strain ATCC 700860 / DSM 12428 / JCM 9974 / NBRC 100139 / OT-3).